We begin with the raw amino-acid sequence, 223 residues long: MKTVSTAVVLAAAAVSLTGCATESSRSLEVEKVASYNTQYHGVRTPISVGTFDNRSSFQKGIFSDGEDRLGSQAKTILVTHLQQTNRFNVLNRTNLNALKQESGISGKAHNLKGADYVVTGDVTEFGRRDVGDHQLFGILGRGKSQIAYAKVALNIVNVNTSEIVYSAQGAGEYALSNREIIGFGGTSGYDATLNGKVLDLAIREAVNSLVQAVDNGAWQPNR.

A signal peptide spans 1–19 (MKTVSTAVVLAAAAVSLTG). Residue Cys20 is the site of N-palmitoyl cysteine attachment. A lipid anchor (S-diacylglycerol cysteine) is attached at Cys20.

The protein resides in the cell membrane. This is Putative lipoprotein NMB1126/NMB1164 from Neisseria meningitidis serogroup B (strain ATCC BAA-335 / MC58).